A 328-amino-acid chain; its full sequence is 3-dehydroquinate synthase (328 aa).

It belongs to the archaeal-type DHQ synthase family.

The enzyme catalyses 2-amino-2,3,7-trideoxy-D-lyxo-hept-6-ulosonate + NAD(+) + H2O = 3-dehydroquinate + NH4(+) + NADH + H(+). In terms of biological role, catalyzes the oxidative deamination and cyclization of 2-amino-3,7-dideoxy-D-threo-hept-6-ulosonic acid (ADH) to yield 3-dehydroquinate (DHQ), which is fed into the canonical shikimic pathway of aromatic amino acid biosynthesis. The polypeptide is 3-dehydroquinate synthase (Methanosphaerula palustris (strain ATCC BAA-1556 / DSM 19958 / E1-9c)).